The primary structure comprises 545 residues: CTP synthase (545 aa).

The interval Met-1–Leu-266 is amidoligase domain. Ser-14 serves as a coordination point for CTP. Residue Ser-14 participates in UTP binding. Residues Ser-15–Leu-20 and Asp-72 each bind ATP. The Mg(2+) site is built by Asp-72 and Glu-140. Residues Asp-147 to Glu-149, Lys-187 to Gln-192, and Lys-223 each bind CTP. UTP contacts are provided by residues Lys-187–Gln-192 and Lys-223. The Glutamine amidotransferase type-1 domain occupies Thr-291 to Lys-545. Gly-353 contacts L-glutamine. Cys-380 (nucleophile; for glutamine hydrolysis) is an active-site residue. L-glutamine-binding positions include Leu-381–Gln-384, Glu-404, and Arg-472. Residues His-518 and Glu-520 contribute to the active site.

Belongs to the CTP synthase family. As to quaternary structure, homotetramer.

It carries out the reaction UTP + L-glutamine + ATP + H2O = CTP + L-glutamate + ADP + phosphate + 2 H(+). The enzyme catalyses L-glutamine + H2O = L-glutamate + NH4(+). The catalysed reaction is UTP + NH4(+) + ATP = CTP + ADP + phosphate + 2 H(+). It functions in the pathway pyrimidine metabolism; CTP biosynthesis via de novo pathway; CTP from UDP: step 2/2. Its activity is regulated as follows. Allosterically activated by GTP, when glutamine is the substrate; GTP has no effect on the reaction when ammonia is the substrate. The allosteric effector GTP functions by stabilizing the protein conformation that binds the tetrahedral intermediate(s) formed during glutamine hydrolysis. Inhibited by the product CTP, via allosteric rather than competitive inhibition. In terms of biological role, catalyzes the ATP-dependent amination of UTP to CTP with either L-glutamine or ammonia as the source of nitrogen. Regulates intracellular CTP levels through interactions with the four ribonucleotide triphosphates. The protein is CTP synthase of Maridesulfovibrio salexigens (strain ATCC 14822 / DSM 2638 / NCIMB 8403 / VKM B-1763) (Desulfovibrio salexigens).